A 244-amino-acid chain; its full sequence is Na(+)-translocating NADH-quinone reductase subunit E (244 aa).

Transmembrane regions (helical) follow at residues 11–31 (LLGI…TFLG), 50–70 (MSVA…HYFI), 90–110 (FLEL…LEVL), 123–143 (GIFL…LFGI), 153–173 (VVFS…FATI), and 191–211 (ISFI…GIDI). The segment covering 222–236 (VTNIATDSPQPNTHS) has biased composition (polar residues). Positions 222-244 (VTNIATDSPQPNTHSSSEEPKAS) are disordered.

Belongs to the NqrDE/RnfAE family. Composed of six subunits; NqrA, NqrB, NqrC, NqrD, NqrE and NqrF.

It localises to the cell inner membrane. The catalysed reaction is a ubiquinone + n Na(+)(in) + NADH + H(+) = a ubiquinol + n Na(+)(out) + NAD(+). In terms of biological role, NQR complex catalyzes the reduction of ubiquinone-1 to ubiquinol by two successive reactions, coupled with the transport of Na(+) ions from the cytoplasm to the periplasm. NqrA to NqrE are probably involved in the second step, the conversion of ubisemiquinone to ubiquinol. The sequence is that of Na(+)-translocating NADH-quinone reductase subunit E from Chlamydia trachomatis serovar A (strain ATCC VR-571B / DSM 19440 / HAR-13).